The primary structure comprises 442 residues: Putative protein YjbI (442 aa).

This is Putative protein YjbI (yjbI) from Escherichia coli (strain K12).